The sequence spans 607 residues: Guanine nucleotide-binding protein-like 1 (607 aa).

Over residues 1-14 (MPRKKPFSVKQKKK) the composition is skewed to basic residues. The segment at 1 to 81 (MPRKKPFSVK…GPRGYDPNRY (81 aa)) is disordered. The segment covering 15-26 (QLQDKRERKRGL) has biased composition (basic and acidic residues). Phosphoserine occurs at positions 32, 33, and 34. Phosphothreonine is present on residues Thr48 and Thr50. Ser51 and Ser68 each carry phosphoserine. In terms of domain architecture, CP-type G spans 178–418 (WRQLWRVLEM…LCDCPGLIFP (241 aa)). GTP is bound at residue 225–228 (NKVD). The residue at position 324 (Ser324) is a Phosphoserine. GTP contacts are provided by residues 367-374 (GFPNVGKS) and 411-415 (DCPGL). Positions 547-607 (GPAGDEEEEE…PYALLGEDEC (61 aa)) are disordered. Over residues 550 to 584 (GDEEEEEEEELSSSCEEEGEEDRDADEEGEGDEDT) the composition is skewed to acidic residues. A phosphoserine mark is found at Ser561, Ser562, and Ser563.

Belongs to the TRAFAC class YlqF/YawG GTPase family.

Possible regulatory or functional link with the histocompatibility cluster. This is Guanine nucleotide-binding protein-like 1 (GNL1) from Pongo abelii (Sumatran orangutan).